A 151-amino-acid polypeptide reads, in one-letter code: 3-hydroxyacyl-[acyl-carrier-protein] dehydratase FabZ (151 aa).

Residue H54 is part of the active site.

Belongs to the thioester dehydratase family. FabZ subfamily.

It is found in the cytoplasm. The enzyme catalyses a (3R)-hydroxyacyl-[ACP] = a (2E)-enoyl-[ACP] + H2O. Involved in unsaturated fatty acids biosynthesis. Catalyzes the dehydration of short chain beta-hydroxyacyl-ACPs and long chain saturated and unsaturated beta-hydroxyacyl-ACPs. This chain is 3-hydroxyacyl-[acyl-carrier-protein] dehydratase FabZ, found in Idiomarina loihiensis (strain ATCC BAA-735 / DSM 15497 / L2-TR).